The primary structure comprises 221 residues: Translation initiation factor 6 (221 aa).

Belongs to the eIF-6 family.

Functionally, binds to the 50S ribosomal subunit and prevents its association with the 30S ribosomal subunit to form the 70S initiation complex. This Methanosphaerula palustris (strain ATCC BAA-1556 / DSM 19958 / E1-9c) protein is Translation initiation factor 6.